A 447-amino-acid polypeptide reads, in one-letter code: N-succinylarginine dihydrolase (447 aa).

Substrate-binding positions include 19–28 (AGLSFGNEAS), asparagine 110, and 137–138 (HR). The active site involves glutamate 174. Residue arginine 214 coordinates substrate. Histidine 250 is a catalytic residue. Residues aspartate 252 and asparagine 365 each coordinate substrate. The active-site Nucleophile is the cysteine 371.

It belongs to the succinylarginine dihydrolase family. As to quaternary structure, homodimer.

It catalyses the reaction N(2)-succinyl-L-arginine + 2 H2O + 2 H(+) = N(2)-succinyl-L-ornithine + 2 NH4(+) + CO2. It participates in amino-acid degradation; L-arginine degradation via AST pathway; L-glutamate and succinate from L-arginine: step 2/5. In terms of biological role, catalyzes the hydrolysis of N(2)-succinylarginine into N(2)-succinylornithine, ammonia and CO(2). This is N-succinylarginine dihydrolase from Acinetobacter baumannii (strain SDF).